Consider the following 428-residue polypeptide: Gamma-glutamyl phosphate reductase (428 aa).

Belongs to the gamma-glutamyl phosphate reductase family.

The protein localises to the cytoplasm. The catalysed reaction is L-glutamate 5-semialdehyde + phosphate + NADP(+) = L-glutamyl 5-phosphate + NADPH + H(+). It participates in amino-acid biosynthesis; L-proline biosynthesis; L-glutamate 5-semialdehyde from L-glutamate: step 2/2. Catalyzes the NADPH-dependent reduction of L-glutamate 5-phosphate into L-glutamate 5-semialdehyde and phosphate. The product spontaneously undergoes cyclization to form 1-pyrroline-5-carboxylate. In Zymomonas mobilis subsp. mobilis (strain ATCC 31821 / ZM4 / CP4), this protein is Gamma-glutamyl phosphate reductase.